The chain runs to 354 residues: Protein-glutamate methylesterase/protein-glutamine glutaminase (354 aa).

Residues Arg6–Ala123 enclose the Response regulatory domain. Asp57 is modified (4-aspartylphosphate). Positions Ala159–Arg351 constitute a CheB-type methylesterase domain. Active-site residues include Ser171, His197, and Asp293.

It belongs to the CheB family. In terms of processing, phosphorylated by CheA. Phosphorylation of the N-terminal regulatory domain activates the methylesterase activity.

The protein localises to the cytoplasm. The catalysed reaction is [protein]-L-glutamate 5-O-methyl ester + H2O = L-glutamyl-[protein] + methanol + H(+). The enzyme catalyses L-glutaminyl-[protein] + H2O = L-glutamyl-[protein] + NH4(+). Its function is as follows. Involved in chemotaxis. Part of a chemotaxis signal transduction system that modulates chemotaxis in response to various stimuli. Catalyzes the demethylation of specific methylglutamate residues introduced into the chemoreceptors (methyl-accepting chemotaxis proteins or MCP) by CheR. Also mediates the irreversible deamidation of specific glutamine residues to glutamic acid. This Bdellovibrio bacteriovorus (strain ATCC 15356 / DSM 50701 / NCIMB 9529 / HD100) protein is Protein-glutamate methylesterase/protein-glutamine glutaminase.